We begin with the raw amino-acid sequence, 277 residues long: tRNA uridine(34) hydroxylase (277 aa).

A Rhodanese domain is found at Ser-126–Ser-221. Cys-181 (cysteine persulfide intermediate) is an active-site residue.

The protein belongs to the TrhO family.

The catalysed reaction is uridine(34) in tRNA + AH2 + O2 = 5-hydroxyuridine(34) in tRNA + A + H2O. In terms of biological role, catalyzes oxygen-dependent 5-hydroxyuridine (ho5U) modification at position 34 in tRNAs. The polypeptide is tRNA uridine(34) hydroxylase (Anaplasma marginale (strain Florida)).